We begin with the raw amino-acid sequence, 285 residues long: Acetylglutamate kinase (285 aa).

Substrate is bound by residues 63–64 (GG), Arg85, and Asn178.

This sequence belongs to the acetylglutamate kinase family. ArgB subfamily.

It localises to the cytoplasm. It catalyses the reaction N-acetyl-L-glutamate + ATP = N-acetyl-L-glutamyl 5-phosphate + ADP. Its pathway is amino-acid biosynthesis; L-arginine biosynthesis; N(2)-acetyl-L-ornithine from L-glutamate: step 2/4. Functionally, catalyzes the ATP-dependent phosphorylation of N-acetyl-L-glutamate. The chain is Acetylglutamate kinase from Synechococcus sp. (strain CC9311).